The sequence spans 112 residues: Chaperone NapD (112 aa).

Belongs to the NapD family. Interacts with the cytoplasmic NapA precursor.

The protein localises to the cytoplasm. Its function is as follows. Chaperone for NapA, the catalytic subunit of the periplasmic nitrate reductase. It binds directly and specifically to the twin-arginine signal peptide of NapA, preventing premature interaction with the Tat translocase and premature export. In Paracoccus pantotrophus (Thiosphaera pantotropha), this protein is Chaperone NapD.